The sequence spans 318 residues: Ribose-phosphate pyrophosphokinase 3 (318 aa).

96–101 provides a ligand contact to ATP; the sequence is RQDKKD. Positions 128, 130, 139, and 143 each coordinate Mg(2+). Residue His130 coordinates ATP. Residues 212 to 227 are binding of phosphoribosylpyrophosphate; the sequence is NDRVAILVDDMADTCV.

It belongs to the ribose-phosphate pyrophosphokinase family. Homodimer. The active form is probably a hexamer composed of 3 homodimers. Requires Mg(2+) as cofactor. Testis.

The enzyme catalyses D-ribose 5-phosphate + ATP = 5-phospho-alpha-D-ribose 1-diphosphate + AMP + H(+). It participates in metabolic intermediate biosynthesis; 5-phospho-alpha-D-ribose 1-diphosphate biosynthesis; 5-phospho-alpha-D-ribose 1-diphosphate from D-ribose 5-phosphate (route I): step 1/1. With respect to regulation, activated by magnesium and inorganic phosphate. Catalyzes the synthesis of phosphoribosylpyrophosphate (PRPP) that is essential for nucleotide synthesis. The sequence is that of Ribose-phosphate pyrophosphokinase 3 (PRPS1L1) from Homo sapiens (Human).